The sequence spans 54 residues: Ovomucoid (54 aa).

Residues valine 4–cysteine 54 form the Kazal-like domain. Intrachain disulfides connect cysteine 6/cysteine 36, cysteine 14/cysteine 33, and cysteine 22/cysteine 54. Asparagine 43 carries N-linked (GlcNAc...) asparagine glycosylation.

It is found in the secreted. The sequence is that of Ovomucoid from Cereopsis novaehollandiae (Cape Barren goose).